Consider the following 475-residue polypeptide: Protein transport protein Sec61 subunit alpha (475 aa).

The next 10 membrane-spanning stretches (helical) occupy residues 33 to 53 (LWTA…LFGI), 76 to 96 (LMEL…LLAG), 118 to 138 (LFGM…GMYG), 145 to 165 (AGIC…VLLL), 173 to 193 (YGLG…TIVW), 241 to 261 (NLMN…FQGF), 289 to 309 (IPII…QMLA), 354 to 374 (FLDP…CAFF), 420 to 440 (AAFG…IGAI), and 441 to 461 (GSGT…EIFV).

Belongs to the SecY/SEC61-alpha family. The SEC61 channel-forming translocon complex consists of channel-forming core components SEC61A1, SEC61B and SEC61G and different auxiliary components such as SEC62 and SEC63. The SEC61 channel associates with the multi-pass translocon (MPT) complex. As to expression, expressed predominantly in epidermal cells of the embryo.

The protein localises to the endoplasmic reticulum membrane. In terms of biological role, component of SEC61 channel-forming translocon complex that mediates transport of signal peptide-containing precursor polypeptides across the endoplasmic reticulum (ER). Forms a ribosome receptor and a gated pore in the ER membrane, both functions required for cotranslational translocation of nascent polypeptides. May cooperate with auxiliary protein SEC62, SEC63 and HSPA5/BiP to enable post-translational transport of small presecretory proteins. The SEC61 channel is also involved in ER membrane insertion of transmembrane proteins: it mediates membrane insertion of the first few transmembrane segments of proteins, while insertion of subsequent transmembrane regions of multi-pass membrane proteins is mediated by the multi-pass translocon (MPT) complex. This Halocynthia roretzi (Sea squirt) protein is Protein transport protein Sec61 subunit alpha.